The chain runs to 317 residues: MPVLGSQRRLLGSLNCTPPATFSLTLAPNRTGPQCLEVSIPDGLFLSLGLVSLVENVLVVAAIAKNRNLHSPMYYFICCLAVSDLLVSVSNVLETAVMLLLEAGALAARAAVVQQLDNVIDVLICGSMVSSLCFLGAIAMDRYISIFYALRYHSVVTLPRAWRIIAAIWVASILTSLLFITYYNHTVVLLCLVGFFIAMLALMAILYVHMLARACQHARDIARLQKRQHPIHQGFGLKGAATLTILLGVFFLCWGPFFLHLSLIVLCPQHPTCGCIFKNFNLFLALIICNAIVDPLIYAFRSQELRKTLQEVLQCSW.

Residues 1–37 (MPVLGSQRRLLGSLNCTPPATFSLTLAPNRTGPQCLE) lie on the Extracellular side of the membrane. Residue asparagine 29 is glycosylated (N-linked (GlcNAc...) asparagine). A helical membrane pass occupies residues 38–63 (VSIPDGLFLSLGLVSLVENVLVVAAI). Residues 64 to 72 (AKNRNLHSP) are Cytoplasmic-facing. The helical transmembrane segment at 73 to 93 (MYYFICCLAVSDLLVSVSNVL) threads the bilayer. The Extracellular segment spans residues 94–118 (ETAVMLLLEAGALAARAAVVQQLDN). Residues 119-140 (VIDVLICGSMVSSLCFLGAIAM) traverse the membrane as a helical segment. At 141-163 (DRYISIFYALRYHSVVTLPRAWR) the chain is on the cytoplasmic side. Residues 164–183 (IIAAIWVASILTSLLFITYY) form a helical membrane-spanning segment. Over 184-191 (NHTVVLLC) the chain is Extracellular. A helical membrane pass occupies residues 192–211 (LVGFFIAMLALMAILYVHML). Residues 212–240 (ARACQHARDIARLQKRQHPIHQGFGLKGA) are Cytoplasmic-facing. The helical transmembrane segment at 241-266 (ATLTILLGVFFLCWGPFFLHLSLIVL) threads the bilayer. At 267–279 (CPQHPTCGCIFKN) the chain is on the extracellular side. Residues 280–300 (FNLFLALIICNAIVDPLIYAF) traverse the membrane as a helical segment. The Cytoplasmic portion of the chain corresponds to 301–317 (RSQELRKTLQEVLQCSW). Cysteine 315 carries S-palmitoyl cysteine lipidation.

Belongs to the G-protein coupled receptor 1 family. In terms of assembly, interacts with MGRN1, but does not undergo MGRN1-mediated ubiquitination; this interaction competes with GNAS-binding and thus inhibits agonist-induced cAMP production. Interacts with OPN3; the interaction results in a decrease in MC1R-mediated cAMP signaling and ultimately a decrease in melanin production in melanocytes.

It localises to the cell membrane. Functionally, receptor for MSH (alpha, beta and gamma) and ACTH. The activity of this receptor is mediated by G proteins which activate adenylate cyclase. Mediates melanogenesis, the production of eumelanin (black/brown) and phaeomelanin (red/yellow), via regulation of cAMP signaling in melanocytes. This Alces alces alces (European moose) protein is Melanocyte-stimulating hormone receptor (MC1R).